Reading from the N-terminus, the 55-residue chain is Large ribosomal subunit protein bL33 (55 aa).

The protein belongs to the bacterial ribosomal protein bL33 family.

This is Large ribosomal subunit protein bL33 from Bordetella avium (strain 197N).